Here is a 430-residue protein sequence, read N- to C-terminus: SH3 domain-containing protein PJ696.02 (430 aa).

Residues 237–372 (EPEDIWGPSS…KPKFKQDSLG (136 aa)) are disordered. A compositionally biased stretch (basic and acidic residues) spans 263–277 (RRGDSYRSNRSRAHD). Ser-285 carries the post-translational modification Phosphoserine. The span at 304–313 (SKMDNRRSKY) shows a compositional bias: basic and acidic residues. A Phosphothreonine modification is found at Thr-316. A phosphoserine mark is found at Ser-318 and Ser-324. Tyr-325 bears the Phosphotyrosine mark. Phosphoserine is present on residues Ser-326, Ser-354, and Ser-406. Residues 333-358 (VYSSDVSTESSSQFSSRSSEYSKPSR) are compositionally biased toward low complexity. The SH3 domain maps to 371–430 (LGPNQARAMYSFAGEQPGDLSFQKGDIIDIVERSGSHDDWWTGRIGYREGIFPANYVKLS).

This sequence belongs to the SH3YL1 family.

The polypeptide is SH3 domain-containing protein PJ696.02 (Schizosaccharomyces pombe (strain 972 / ATCC 24843) (Fission yeast)).